The following is an 882-amino-acid chain: DNA mismatch repair protein MutS (882 aa).

Gly627 to Ser634 lines the ATP pocket.

Belongs to the DNA mismatch repair MutS family.

Its function is as follows. This protein is involved in the repair of mismatches in DNA. It is possible that it carries out the mismatch recognition step. This protein has a weak ATPase activity. This chain is DNA mismatch repair protein MutS, found in Anaeromyxobacter dehalogenans (strain 2CP-1 / ATCC BAA-258).